Reading from the N-terminus, the 416-residue chain is Phosphoglycerate kinase (416 aa).

Substrate-binding positions include 24–26 (DLN), R40, 63–66 (HLGR), R126, and R166. ATP contacts are provided by residues K216, G304, E335, and 364 to 367 (GGDS).

This sequence belongs to the phosphoglycerate kinase family. Monomer.

The protein localises to the cytoplasm. It carries out the reaction (2R)-3-phosphoglycerate + ATP = (2R)-3-phospho-glyceroyl phosphate + ADP. Its pathway is carbohydrate degradation; glycolysis; pyruvate from D-glyceraldehyde 3-phosphate: step 2/5. In Mycobacterium leprae (strain Br4923), this protein is Phosphoglycerate kinase.